We begin with the raw amino-acid sequence, 52 residues long: uncharacterized protein (52 aa).

This is an uncharacterized protein from Bacillus subtilis (strain 168).